Here is a 548-residue protein sequence, read N- to C-terminus: Eukaryotic translation initiation factor 3 subunit D (548 aa).

The residue at position 53 (Lys53) is an N6-acetyllysine. Ser161 is subject to Phosphoserine. Positions 285-299 are RNA gate; the sequence is DFDLLTVSETANEPP. The interval 523–548 is disordered; sequence PDGTFSSDEDEEEEEEEEEEEEEEET. Phosphoserine occurs at positions 528 and 529. Residues 529-548 show a composition bias toward acidic residues; that stretch reads SDEDEEEEEEEEEEEEEEET.

This sequence belongs to the eIF-3 subunit D family. Component of the eukaryotic translation initiation factor 3 (eIF-3) complex, which is composed of 13 subunits: EIF3A, EIF3B, EIF3C, EIF3D, EIF3E, EIF3F, EIF3G, EIF3H, EIF3I, EIF3J, EIF3K, EIF3L and EIF3M. The eIF-3 complex appears to include 3 stable modules: module A is composed of EIF3A, EIF3B, EIF3G and EIF3I; module B is composed of EIF3F, EIF3H, and EIF3M; and module C is composed of EIF3C, EIF3D, EIF3E, EIF3K and EIF3L. EIF3C of module C binds EIF3B of module A and EIF3H of module B, thereby linking the three modules. EIF3J is a labile subunit that binds to the eIF-3 complex via EIF3B. The eIF-3 complex interacts with RPS6KB1 under conditions of nutrient depletion. Mitogenic stimulation leads to binding and activation of a complex composed of MTOR and RPTOR, leading to phosphorylation and release of RPS6KB1 and binding of EIF4B to eIF-3. As to quaternary structure, (Microbial infection) Interacts with Norwalk virus VPg protein.

Its subcellular location is the cytoplasm. Functionally, mRNA cap-binding component of the eukaryotic translation initiation factor 3 (eIF-3) complex, a complex required for several steps in the initiation of protein synthesis of a specialized repertoire of mRNAs. The eIF-3 complex associates with the 40S ribosome and facilitates the recruitment of eIF-1, eIF-1A, eIF-2:GTP:methionyl-tRNAi and eIF-5 to form the 43S pre-initiation complex (43S PIC). The eIF-3 complex stimulates mRNA recruitment to the 43S PIC and scanning of the mRNA for AUG recognition. The eIF-3 complex is also required for disassembly and recycling of post-termination ribosomal complexes and subsequently prevents premature joining of the 40S and 60S ribosomal subunits prior to initiation. The eIF-3 complex specifically targets and initiates translation of a subset of mRNAs involved in cell proliferation, including cell cycling, differentiation and apoptosis, and uses different modes of RNA stem-loop binding to exert either translational activation or repression. In the eIF-3 complex, EIF3D specifically recognizes and binds the 7-methylguanosine cap of a subset of mRNAs. In terms of biological role, (Microbial infection) In case of FCV infection, plays a role in the ribosomal termination-reinitiation event leading to the translation of VP2. The sequence is that of Eukaryotic translation initiation factor 3 subunit D from Homo sapiens (Human).